The chain runs to 321 residues: tRNA U34 carboxymethyltransferase (321 aa).

Carboxy-S-adenosyl-L-methionine-binding positions include Lys-90, Trp-104, Lys-109, Gly-129, 151-153, 180-181, Met-195, Tyr-199, and Arg-314; these read DPT and IE.

This sequence belongs to the class I-like SAM-binding methyltransferase superfamily. CmoB family. Homotetramer.

It carries out the reaction carboxy-S-adenosyl-L-methionine + 5-hydroxyuridine(34) in tRNA = 5-carboxymethoxyuridine(34) in tRNA + S-adenosyl-L-homocysteine + H(+). Functionally, catalyzes carboxymethyl transfer from carboxy-S-adenosyl-L-methionine (Cx-SAM) to 5-hydroxyuridine (ho5U) to form 5-carboxymethoxyuridine (cmo5U) at position 34 in tRNAs. The protein is tRNA U34 carboxymethyltransferase of Histophilus somni (strain 129Pt) (Haemophilus somnus).